The chain runs to 284 residues: Nucleotide-binding protein Shewmr4_0670 (284 aa).

8–15 (GRSGSGKS) is an ATP binding site. Residue 56–59 (DVRN) coordinates GTP.

Belongs to the RapZ-like family.

In terms of biological role, displays ATPase and GTPase activities. This Shewanella sp. (strain MR-4) protein is Nucleotide-binding protein Shewmr4_0670.